Consider the following 493-residue polypeptide: Transcript termination protein OPG145 (493 aa).

The Helicase ATP-binding domain maps to 100 to 256; sequence MIKLKRPLYI…NSIINIAKLS (157 aa). An ATP-binding site is contributed by 113 to 120; that stretch reads LACGFGKT. Positions 206 to 209 match the DESH box motif; it reads DESH.

Belongs to the helicase family. Poxviruses subfamily. As to quaternary structure, interacts with OPG087. Might be part of a transcription complex composed at least of OPG087, OPG110, and OPG145.

Its subcellular location is the virion. Functionally, DNA helicase which seems to act as a postreplicative transcription termination factor. Involved in ATP-dependent release of nascent RNA. Forms a stable complex with single-stranded DNA, and to a lesser extent RNA. This chain is Transcript termination protein OPG145 (OPG145), found in Variola virus (isolate Human/India/Ind3/1967) (VARV).